The following is a 407-amino-acid chain: Carbamoyl phosphate synthase small chain (407 aa).

Residues 1-205 form a CPSase region; the sequence is MTETTSKTAP…LADGYGEQDT (205 aa). L-glutamine-binding residues include serine 60, glycine 257, and glycine 259. The region spanning 209–397 is the Glutamine amidotransferase type-1 domain; that stretch reads HVVALDFGVK…INLIREKKGE (189 aa). Cysteine 286 serves as the catalytic Nucleophile. 5 residues coordinate L-glutamine: leucine 287, glutamine 290, asparagine 328, glycine 330, and phenylalanine 331. Catalysis depends on residues histidine 370 and glutamate 372.

It belongs to the CarA family. Composed of two chains; the small (or glutamine) chain promotes the hydrolysis of glutamine to ammonia, which is used by the large (or ammonia) chain to synthesize carbamoyl phosphate. Tetramer of heterodimers (alpha,beta)4.

It carries out the reaction hydrogencarbonate + L-glutamine + 2 ATP + H2O = carbamoyl phosphate + L-glutamate + 2 ADP + phosphate + 2 H(+). The enzyme catalyses L-glutamine + H2O = L-glutamate + NH4(+). It functions in the pathway amino-acid biosynthesis; L-arginine biosynthesis; carbamoyl phosphate from bicarbonate: step 1/1. It participates in pyrimidine metabolism; UMP biosynthesis via de novo pathway; (S)-dihydroorotate from bicarbonate: step 1/3. In terms of biological role, small subunit of the glutamine-dependent carbamoyl phosphate synthetase (CPSase). CPSase catalyzes the formation of carbamoyl phosphate from the ammonia moiety of glutamine, carbonate, and phosphate donated by ATP, constituting the first step of 2 biosynthetic pathways, one leading to arginine and/or urea and the other to pyrimidine nucleotides. The small subunit (glutamine amidotransferase) binds and cleaves glutamine to supply the large subunit with the substrate ammonia. This chain is Carbamoyl phosphate synthase small chain, found in Brucella anthropi (strain ATCC 49188 / DSM 6882 / CCUG 24695 / JCM 21032 / LMG 3331 / NBRC 15819 / NCTC 12168 / Alc 37) (Ochrobactrum anthropi).